The following is a 251-amino-acid chain: PEDMDTPRNVYKVSTQNPGSDVAAETAAALAAASIVFKDSDPSYSGKLLHTAMKVFDFADRYRGSYSDSIGSVVCPFYCSYSGHHDELLWGASWIHRASQNRSYLVYIKSNGHILGEDDDGFSASWDDKETGTKVLLVSKSFLERHVEEFQLYKAHSGNYICSLLPGTSNFQGQYTPGGLLYKASESNLQYVTSTTLLLLTYAKYLRTNGGVATCGSSKVTAETLISEAKKQVDYILGNNPAKISYMVGFG.

It belongs to the glycosyl hydrolase 9 (cellulase E) family.

It catalyses the reaction Endohydrolysis of (1-&gt;4)-beta-D-glucosidic linkages in cellulose, lichenin and cereal beta-D-glucans.. In terms of biological role, degrades carboxymethylcellulose (CMC). The sequence is that of Endoglucanase CX from Prunus persica (Peach).